The sequence spans 293 residues: MYEEMDKLIEKASILIEALPYIQKLYGKTVVIKYGGNAMINDKLKNWVMEDITLLKYIGVNPIVVHGGGPEINSVLKKLNVESQFVNGLRVTDMQTMEVAQMVLVGKTNKELVSMLNQKGGKAIGICGIDGNLIQARKHYEIVNGEKVDLGYVGEVVSINAKVLEMLAKDEYIPVVAPIGVGEDGTSYNINADTVAAEIAKAIKAEKLMFMTDVEGLKYDKNSSEIISAISADEVLKMIDEGKIDGGMIPKVLGCIDALKHGVNRTHILDGRIPHCILLEIFTDKGIGTMIHL.

Residues 68–69, R90, and N189 contribute to the substrate site; that span reads GG.

The protein belongs to the acetylglutamate kinase family. ArgB subfamily.

The protein resides in the cytoplasm. The catalysed reaction is N-acetyl-L-glutamate + ATP = N-acetyl-L-glutamyl 5-phosphate + ADP. The protein operates within amino-acid biosynthesis; L-arginine biosynthesis; N(2)-acetyl-L-ornithine from L-glutamate: step 2/4. In terms of biological role, catalyzes the ATP-dependent phosphorylation of N-acetyl-L-glutamate. In Caldicellulosiruptor saccharolyticus (strain ATCC 43494 / DSM 8903 / Tp8T 6331), this protein is Acetylglutamate kinase.